The following is a 441-amino-acid chain: Protein kinase C and casein kinase substrate in neurons protein 1 (441 aa).

Phosphoserine occurs at positions 2 and 76. Positions 10–280 (EEITDSFWEV…AIRGADAQED (271 aa)) constitute an F-BAR domain. The stretch at 23-272 (KRTVKRIDDG…HVYRELEQAI (250 aa)) forms a coiled coil. Threonine 181 carries the post-translational modification Phosphothreonine. A disordered region spans residues 297–380 (PQFEEWNPDL…ANGGANPFED (84 aa)). Positions 311 to 321 (AKKEKQPKKAE) are enriched in basic and acidic residues. The span at 324–355 (TLSNATGAVESTSQAGDRGSVSSYDRGQTYAT) shows a compositional bias: polar residues. 5 positions are modified to phosphoserine: serine 343, serine 345, serine 346, serine 358, and serine 362. Residues 382–441 (AKGVRVRALYDYDGQEQDELSFKAGDELTKLGEEDEQGWCRGRLDSGQLGLYPANYVEAI) form the SH3 domain. Tyrosine 391 is subject to Phosphotyrosine. 2 positions are modified to phosphoserine: serine 402 and serine 427.

The protein belongs to the PACSIN family. In terms of assembly, homodimer. May form heterooligomers with other PACSINs. Interacts with both COBL and DBNL. Identified in a complex composed of COBL, PACSIN1 and WASL. Interacts with EHD3. Interacts (via SH3 domain) with SYNJ1 and WASL. Interacts (via SH3 domain) with DNM1; the interaction is reduced by DNM1 phosphorylation. Interacts with DNM2 and DNM3. Interacts with MAPT. Interacts with EHD1. Interacts with TRPV4. Post-translationally, phosphorylated by casein kinase 2 (CK2) and protein kinase C (PKC). Highly expressed in brain. Detected in hippocampus and dorsal root ganglion neurons. Detected in rod photoreceptor terminals in the outer plexiform layer of the retina (at protein level). In CNS neurons, high levels in the pyramidal cells of the hippocampus, Purkinje cells of the cerebellum and large neurons of the cortex and brain stem.

It localises to the cytoplasm. It is found in the cell projection. The protein resides in the synapse. Its subcellular location is the synaptosome. The protein localises to the ruffle membrane. It localises to the membrane. It is found in the cytoplasmic vesicle membrane. The protein resides in the cytosol. Its subcellular location is the cell membrane. Its function is as follows. Binds to membranes via its F-BAR domain and mediates membrane tubulation. Plays a role in the reorganization of the microtubule cytoskeleton via its interaction with MAPT; this decreases microtubule stability and inhibits MAPT-induced microtubule polymerization. Plays a role in cellular transport processes by recruiting DNM1, DNM2 and DNM3 to membranes. Plays a role in the reorganization of the actin cytoskeleton and in neuron morphogenesis via its interaction with COBL and WASL, and by recruiting COBL to the cell cortex. Plays a role in the regulation of neurite formation, neurite branching and the regulation of neurite length. Required for normal synaptic vesicle endocytosis; this process retrieves previously released neurotransmitters to accommodate multiple cycles of neurotransmission. Required for normal excitatory and inhibitory synaptic transmission. The chain is Protein kinase C and casein kinase substrate in neurons protein 1 (Pacsin1) from Mus musculus (Mouse).